Reading from the N-terminus, the 409-residue chain is LL-diaminopimelate aminotransferase (409 aa).

Substrate is bound by residues Tyr15 and Gly42. Pyridoxal 5'-phosphate is bound by residues Tyr72, 108-109 (AK), Tyr132, Asn186, Tyr217, and 245-247 (SFS). Lys109, Tyr132, and Asn186 together coordinate substrate. The residue at position 248 (Lys248) is an N6-(pyridoxal phosphate)lysine. Arg256 and Asn291 together coordinate pyridoxal 5'-phosphate. Residues Asn291 and Arg385 each contribute to the substrate site.

The protein belongs to the class-I pyridoxal-phosphate-dependent aminotransferase family. LL-diaminopimelate aminotransferase subfamily. As to quaternary structure, homodimer. Requires pyridoxal 5'-phosphate as cofactor.

The enzyme catalyses (2S,6S)-2,6-diaminopimelate + 2-oxoglutarate = (S)-2,3,4,5-tetrahydrodipicolinate + L-glutamate + H2O + H(+). It participates in amino-acid biosynthesis; L-lysine biosynthesis via DAP pathway; LL-2,6-diaminopimelate from (S)-tetrahydrodipicolinate (aminotransferase route): step 1/1. Involved in the synthesis of meso-diaminopimelate (m-DAP or DL-DAP), required for both lysine and peptidoglycan biosynthesis. Catalyzes the direct conversion of tetrahydrodipicolinate to LL-diaminopimelate. The polypeptide is LL-diaminopimelate aminotransferase (Desulfosudis oleivorans (strain DSM 6200 / JCM 39069 / Hxd3) (Desulfococcus oleovorans)).